A 432-amino-acid polypeptide reads, in one-letter code: Anaerobic glycerol-3-phosphate dehydrogenase subunit B (432 aa).

This sequence belongs to the anaerobic G-3-P dehydrogenase subunit B family. As to quaternary structure, composed of a catalytic GlpA/B dimer and of membrane bound GlpC. FMN serves as cofactor.

The catalysed reaction is a quinone + sn-glycerol 3-phosphate = dihydroxyacetone phosphate + a quinol. It participates in polyol metabolism; glycerol degradation via glycerol kinase pathway; glycerone phosphate from sn-glycerol 3-phosphate (anaerobic route): step 1/1. Its function is as follows. Conversion of glycerol 3-phosphate to dihydroxyacetone. Uses fumarate or nitrate as electron acceptor. The sequence is that of Anaerobic glycerol-3-phosphate dehydrogenase subunit B from Histophilus somni (strain 129Pt) (Haemophilus somnus).